A 141-amino-acid polypeptide reads, in one-letter code: Hemoglobin subunit alpha (141 aa).

Residues 1–141 (VLSPADKTNV…VSTVLTSKYR (141 aa)) enclose the Globin domain. The residue at position 3 (Ser3) is a Phosphoserine. The residue at position 7 (Lys7) is an N6-succinyllysine. Position 8 is a phosphothreonine (Thr8). The residue at position 11 (Lys11) is an N6-succinyllysine. Lys16 is modified (N6-acetyllysine; alternate). N6-succinyllysine; alternate is present on Lys16. Tyr24 is modified (phosphotyrosine). Residue Ser35 is modified to Phosphoserine. Position 40 is an N6-succinyllysine (Lys40). Ser49 is modified (phosphoserine). Residue His58 participates in O2 binding. His87 is a binding site for heme b. A Phosphoserine modification is found at Ser102. At Thr108 the chain carries Phosphothreonine. Position 124 is a phosphoserine (Ser124). Thr134 and Thr137 each carry phosphothreonine. Ser138 carries the post-translational modification Phosphoserine.

The protein belongs to the globin family. As to quaternary structure, heterotetramer of two alpha chains and two beta chains. Red blood cells.

Involved in oxygen transport from the lung to the various peripheral tissues. In Tamias merriami (Merriam's chipmunk), this protein is Hemoglobin subunit alpha.